Reading from the N-terminus, the 495-residue chain is Putative aldehyde dehydrogenase AldA (495 aa).

212–218 serves as a coordination point for NAD(+); the sequence is GKGSESG. Catalysis depends on residues E256 and C290.

The protein belongs to the aldehyde dehydrogenase family.

The enzyme catalyses an aldehyde + NAD(+) + H2O = a carboxylate + NADH + 2 H(+). This is Putative aldehyde dehydrogenase AldA (aldA) from Staphylococcus aureus (strain USA300).